The following is a 285-amino-acid chain: N(G),N(G)-dimethylarginine dimethylaminohydrolase 1 (285 aa).

A2 carries the post-translational modification N-acetylalanine. Substrate contacts are provided by residues L30, D73, 78–79 (ED), R98, and R145. H173 serves as the catalytic Proton donor. C222 is subject to S-nitrosocysteine. Substrate is bound at residue V268. C274 carries the S-nitrosocysteine modification. C274 functions as the Nucleophile in the catalytic mechanism. Zn(2+) is bound at residue C274.

It belongs to the DDAH family. As to quaternary structure, monomer. As to expression, detected in brain, liver, kidney and pancreas, and at low levels in skeletal muscle.

It carries out the reaction N(omega),N(omega)-dimethyl-L-arginine + H2O = dimethylamine + L-citrulline. The enzyme catalyses N(omega)-methyl-L-arginine + H2O = L-citrulline + methylamine. Its activity is regulated as follows. Inhibited by zinc ions. Enzyme purified in the absence of 1,10-phenanthroline contains on average 0.4 zinc atoms per subunit. Inhibited by 4-hydroxy-nonenal through the formation of a covalent adduct with His-173. Competitively inhibited by N(5)-iminopropyl-ornithine. Its function is as follows. Hydrolyzes N(G),N(G)-dimethyl-L-arginine (ADMA) and N(G)-monomethyl-L-arginine (MMA) which act as inhibitors of NOS. Has therefore a role in the regulation of nitric oxide generation. The chain is N(G),N(G)-dimethylarginine dimethylaminohydrolase 1 from Homo sapiens (Human).